The following is a 1401-amino-acid chain: DNA-directed RNA polymerase subunit beta'' (1401 aa).

Zn(2+) contacts are provided by Cys224, Cys294, Cys301, and Cys304.

This sequence belongs to the RNA polymerase beta' chain family. RpoC2 subfamily. As to quaternary structure, in plastids the minimal PEP RNA polymerase catalytic core is composed of four subunits: alpha, beta, beta', and beta''. When a (nuclear-encoded) sigma factor is associated with the core the holoenzyme is formed, which can initiate transcription. The cofactor is Zn(2+).

The protein resides in the plastid. It is found in the chloroplast. The enzyme catalyses RNA(n) + a ribonucleoside 5'-triphosphate = RNA(n+1) + diphosphate. In terms of biological role, DNA-dependent RNA polymerase catalyzes the transcription of DNA into RNA using the four ribonucleoside triphosphates as substrates. In Nymphaea alba (White water-lily), this protein is DNA-directed RNA polymerase subunit beta''.